A 692-amino-acid chain; its full sequence is Protein artemis (692 aa).

Threonine 380 is modified (phosphothreonine). Serine 385 carries the post-translational modification Phosphoserine. 2 disordered regions span residues 503 to 555 (RLEN…DSQS) and 640 to 660 (STNA…PEAE). Residues 507-520 (FPSSTEAGGSQSPK) show a composition bias toward polar residues. Positions 530 to 543 (THISSQNSSQSTHI) are enriched in low complexity. Polar residues-rich tracts occupy residues 544–555 (TEQGSQGWDSQS) and 640–650 (STNADSQSSSD). The residue at position 645 (serine 645) is a Phosphoserine; by ATM.

This sequence belongs to the DNA repair metallo-beta-lactamase (DRMBL) family. In terms of assembly, interacts with LIG4; the interaction is direct. Interacts with ATM. Interacts with BRCA1. Interacts with PRKDC. Interacts with TP53BP1. Also exhibits ATM- and phosphorylation-dependent interaction with the MRN complex, composed of MRE11, RAD50, and NBN. In terms of processing, phosphorylation on undefined residues by PRKDC may stimulate endonucleolytic activity on 5' and 3' hairpins and overhangs. PRKDC must remain present, even after phosphorylation, for efficient hairpin opening. Also phosphorylated by ATM in response to ionizing radiation (IR) and by ATR in response to ultraviolet (UV) radiation.

It localises to the nucleus. Its function is as follows. Required for V(D)J recombination, the process by which exons encoding the antigen-binding domains of immunoglobulins and T-cell receptor proteins are assembled from individual V, (D), and J gene segments. V(D)J recombination is initiated by the lymphoid specific RAG endonuclease complex, which generates site specific DNA double strand breaks (DSBs). These DSBs present two types of DNA end structures: hairpin sealed coding ends and phosphorylated blunt signal ends. These ends are independently repaired by the non homologous end joining (NHEJ) pathway to form coding and signal joints respectively. This protein exhibits single-strand specific 5'-3' exonuclease activity in isolation, and acquires endonucleolytic activity on 5' and 3' hairpins and overhangs when in a complex with PRKDC. The latter activity is required specifically for the resolution of closed hairpins prior to the formation of the coding joint. May also be required for the repair of complex DSBs induced by ionizing radiation, which require substantial end-processing prior to religation by NHEJ. This is Protein artemis (DCLRE1C) from Pongo abelii (Sumatran orangutan).